Here is a 613-residue protein sequence, read N- to C-terminus: ATP-dependent RNA helicase DeaD (613 aa).

A Q motif motif is present at residues 5–33 (ITFNDLGLPEFILKAVSDLGFETPSPIQQ). In terms of domain architecture, Helicase ATP-binding spans 36 to 207 (IPHLLNGNDV…KRFMNDPQEV (172 aa)). Residue 49-56 (AQTGSGKT) participates in ATP binding. Residues 155–158 (DEAD) carry the DEAD box motif. In terms of domain architecture, Helicase C-terminal spans 231–378 (KNEALLRFLE…EVELPNHLVL (148 aa)). Disordered regions lie at residues 434-476 (ILPP…PQPM) and 552-613 (AVKS…RSSF). Composition is skewed to basic and acidic residues over residues 440–469 (PMEK…ERKG) and 556–613 (DNSR…RSSF).

The protein belongs to the DEAD box helicase family. DeaD/CsdA subfamily.

The protein resides in the cytoplasm. The enzyme catalyses ATP + H2O = ADP + phosphate + H(+). In terms of biological role, DEAD-box RNA helicase involved in various cellular processes at low temperature, including ribosome biogenesis, mRNA degradation and translation initiation. The sequence is that of ATP-dependent RNA helicase DeaD from Haemophilus influenzae (strain ATCC 51907 / DSM 11121 / KW20 / Rd).